The chain runs to 799 residues: MDLPVDEWKSYLLKKWASLPKSVQDTISTAETLSDIFLPSSSLLQPEDEMFLKELSSSYSVEKDNDAPLFYREEGNRKFQEKEYTDAAVLYSKGVSHSRPNTEDISLCYANRSAALFHLGQYEACLKDIVEAGMHGYPERLQPKMMVRKTECLVNLGRLQEARQTISDLESSLTAKPTLVLSSYQILQRNVQHLKIKIQEKETLPEPIPAALTNAFEDIALGEENTQISGASLSVSLCTHPLKGRHLVATKDILPGELLVKEDAFVSVLIPGEMPRPHHCLENKWDTRVTSGDLYCHRCLKHTLATVPCGSCSYAKYCSQECMQQAWDLYHSTECSLGGLLLTLGVFCHVALRMTLLARFEDVDRVVRMLCDEVGSTDTCLPESKNLVKAFDYTSQGESEEKSKIGEPPIPGCNVNGKYGSNYNAIFSLLPHTEKHSPEHRFICAISVSALCRQLKADSVQAQTLKSPKLKAVTPGLCADLTVWGAAMLRHMLQLQCNAQAITSICHTGSNESIITNSRQIRLATGIFPVVSLLNHSCRPNTSVSFTGTVATVRAAQRIAKGQEILHCYGPHESRMGVAERQQRLSSQYFFDCRCGACHAETLRAAAAPRWEAFCCKTCRALMQGNDVLSCSNESCTNSVSRDQLVSRLQDLQQQVCMAQKLLRTGKPEQAIQQLLRCREAAESFLSAEHTVLGEIEDGLAQAHATLGNWLKSAAHVQKSLQVVETRHGPSSVEIGHELFKLAQVLFNGLAVPEALSAIWKAERILLVHCGPESEEVRELREMRSCLLDSSFVPVGPLV.

112–114 (RSA) contacts S-adenosyl-L-methionine. In terms of domain architecture, SET spans 233–570 (LSVSLCTHPL…KGQEILHCYG (338 aa)). Residues Cys296, Cys299, Cys309, Cys312, Cys318, Cys322, His331, and Cys335 each contribute to the Zn(2+) site. An MYND-type zinc finger spans residues 296–335 (CHRCLKHTLATVPCGSCSYAKYCSQECMQQAWDLYHSTEC). S-adenosyl-L-methionine-binding positions include 535-536 (NH), Tyr569, and Phe591.

The protein belongs to the class V-like SAM-binding methyltransferase superfamily. As to quaternary structure, interacts (via MYND-type zinc finger) with HDAC1.

Its subcellular location is the nucleus. It localises to the cytoplasm. It catalyses the reaction L-lysyl-[protein] + S-adenosyl-L-methionine = N(6)-methyl-L-lysyl-[protein] + S-adenosyl-L-homocysteine + H(+). Protein-lysine N-methyltransferase. Monomethylates PRMT5, modulating its transcriptional activity. May also act as a histone methyltransferase. Plays a critical role in cardiac development. Acts as a key epigenetic regulator of gene expression during cardiac development via its dual activities as a methyltransferase and negative regulator of HDAC1. The protein is Protein-lysine N-methyltransferase SMYD4 (Smyd4) of Mus musculus (Mouse).